A 655-amino-acid chain; its full sequence is Probable inactive receptor kinase At1g48480 (655 aa).

A signal peptide spans 1–32 (MRVFFFPNSSMAILSVFLSLLLLSLPLPSTQD). 6 LRR repeats span residues 71–95 (SNRV…IFGN), 98–120 (QLRT…LSTS), 122–144 (NLRH…LFSL), 146–169 (HLVR…TNLT), 170–192 (KLKT…DLPL), and 194–215 (QFNV…RFES). The interval 234–260 (EETVPSQPTSGGNRTPPSVEGSEEKKK) is disordered. The segment covering 237–249 (VPSQPTSGGNRTP) has biased composition (polar residues). Residues 269-289 (IAGIVIGCVVGFALIVLILMV) traverse the membrane as a helical segment. Residues 371-646 (RASAEVLGKG…RKMENLRPYS (276 aa)) form the Protein kinase domain. Serine 373 is modified (phosphoserine). 377–385 (LGKGTFGTA) provides a ligand contact to ATP. Threonine 394 carries the phosphothreonine modification. Lysine 399 is a binding site for ATP. Serine 450 is subject to Phosphoserine. The residue at position 526 (threonine 526) is a Phosphothreonine. Residue serine 546 is modified to Phosphoserine. Phosphothreonine is present on threonine 622.

Belongs to the protein kinase superfamily. As to expression, highly expressed in seedlings and leaves. Lower expression in roots, stems, flowers and siliques. Detected in the vascular tissues of roots, in the trichomes of young rosettes leaves and hydathodes, in the floral abscission zones, in filament apex and stomata cells of anthers, in inflorescence stems and in sepals.

The protein localises to the cell membrane. The polypeptide is Probable inactive receptor kinase At1g48480 (RKL1) (Arabidopsis thaliana (Mouse-ear cress)).